Reading from the N-terminus, the 353-residue chain is RNA replication protein (353 aa).

Positions 137–244 (GVCTESDYEA…NRALFIKDTH (108 aa)) constitute a RdRp catalytic domain.

The protein belongs to the potexviruses/carlaviruses RNA replication protein family.

It catalyses the reaction RNA(n) + a ribonucleoside 5'-triphosphate = RNA(n+1) + diphosphate. It carries out the reaction ATP + H2O = ADP + phosphate + H(+). RNA replication. The central part of this protein possibly functions as an ATP-binding helicase. The sequence is that of RNA replication protein from Potato virus S (strain Peruvian).